Here is a 308-residue protein sequence, read N- to C-terminus: Aspartate carbamoyltransferase catalytic subunit (308 aa).

Positions 55 and 56 each coordinate carbamoyl phosphate. Lys83 provides a ligand contact to L-aspartate. 3 residues coordinate carbamoyl phosphate: Arg105, His133, and Gln136. L-aspartate is bound by residues Arg166 and Arg223. 2 residues coordinate carbamoyl phosphate: Gly264 and Pro265.

The protein belongs to the aspartate/ornithine carbamoyltransferase superfamily. ATCase family. As to quaternary structure, heterododecamer (2C3:3R2) of six catalytic PyrB chains organized as two trimers (C3), and six regulatory PyrI chains organized as three dimers (R2).

The enzyme catalyses carbamoyl phosphate + L-aspartate = N-carbamoyl-L-aspartate + phosphate + H(+). Its pathway is pyrimidine metabolism; UMP biosynthesis via de novo pathway; (S)-dihydroorotate from bicarbonate: step 2/3. Catalyzes the condensation of carbamoyl phosphate and aspartate to form carbamoyl aspartate and inorganic phosphate, the committed step in the de novo pyrimidine nucleotide biosynthesis pathway. The chain is Aspartate carbamoyltransferase catalytic subunit from Salinispora arenicola (strain CNS-205).